We begin with the raw amino-acid sequence, 445 residues long: Crotonyl-CoA reductase (445 aa).

Glu-149 lines the Zn(2+) pocket.

It belongs to the zinc-containing alcohol dehydrogenase family. Crotonyl-CoA carboxylase/reductase subfamily. As to quaternary structure, homodimer. Zn(2+) is required as a cofactor.

It catalyses the reaction butanoyl-CoA + NADP(+) = (2E)-butenoyl-CoA + NADPH + H(+). Its activity is regulated as follows. Inhibited by NADPH at concentrations above 200 uM, by MgCl (30%), by ZnCl(2) (55%), and by CoCl, MnCl and CaCl (100%). Also inhibited by iodoacetamide, N-ethylmaleamide, the thiol group inhibitor beta-chloromercuribenzoate, palmitoyl-CoA and myristoyl-CoA. Catalyzes the conversion of crotonyl-CoA to butyryl-CoA. It uses only NADP as electron donor. May have a role in providing butyryl-CoA as a starter unit for straight-chain fatty acid biosynthesis. The chain is Crotonyl-CoA reductase (ccrA2) from Streptomyces avermitilis (strain ATCC 31267 / DSM 46492 / JCM 5070 / NBRC 14893 / NCIMB 12804 / NRRL 8165 / MA-4680).